The following is a 452-amino-acid chain: Probable glycine dehydrogenase (decarboxylating) subunit 1 (452 aa).

The protein belongs to the GcvP family. N-terminal subunit subfamily. In terms of assembly, the glycine cleavage system is composed of four proteins: P, T, L and H. In this organism, the P 'protein' is a heterodimer of two subunits.

It carries out the reaction N(6)-[(R)-lipoyl]-L-lysyl-[glycine-cleavage complex H protein] + glycine + H(+) = N(6)-[(R)-S(8)-aminomethyldihydrolipoyl]-L-lysyl-[glycine-cleavage complex H protein] + CO2. Its function is as follows. The glycine cleavage system catalyzes the degradation of glycine. The P protein binds the alpha-amino group of glycine through its pyridoxal phosphate cofactor; CO(2) is released and the remaining methylamine moiety is then transferred to the lipoamide cofactor of the H protein. The chain is Probable glycine dehydrogenase (decarboxylating) subunit 1 from Novosphingobium aromaticivorans (strain ATCC 700278 / DSM 12444 / CCUG 56034 / CIP 105152 / NBRC 16084 / F199).